We begin with the raw amino-acid sequence, 279 residues long: Thioredoxin-like 1-2, chloroplastic (279 aa).

The N-terminal 34 residues, 1-34, are a transit peptide targeting the chloroplast; sequence MAATAAQAVAVKGSVAVPPCGSRGRRRGAVASVR. The Thioredoxin domain occupies 61-203; the sequence is PRRSRPVPRN…FRDALAKHKP (143 aa). Catalysis depends on nucleophile residues Cys126 and Cys129. Cys126 and Cys129 form a disulfide bridge. The disordered stretch occupies residues 242 to 279; the sequence is GDAAAAQELDRGSTKLSPPAKPLVKQGSEERSLVSSGR.

It belongs to the thioredoxin family.

The protein resides in the plastid. Its subcellular location is the chloroplast. In terms of biological role, probable thiol-disulfide oxidoreductase that may participate in various redox reactions. In Oryza sativa subsp. japonica (Rice), this protein is Thioredoxin-like 1-2, chloroplastic.